Here is a 486-residue protein sequence, read N- to C-terminus: HTH-type transcriptional regulator PrpR (486 aa).

Positions 22 to 76 constitute an HTH cro/C1-type domain; that stretch reads LRRLRQERGLTQVALAKALDLSTSYVNQLENDQRPITVPVLLLLTERFDLSAQYF. The H-T-H motif DNA-binding region spans 33–52; that stretch reads QVALAKALDLSTSYVNQLEN.

It belongs to the short-chain fatty acyl-CoA assimilation regulator (ScfR) family.

Its pathway is organic acid metabolism; propanoate degradation. It participates in steroid metabolism; cholesterol metabolism. Plays a key role in regulating expression of enzymes involved in the catabolism of short chain fatty acids (SCFA) via both the glyoxylate (acetyl degradation route) and the methylcitrate cycle (propionate degradation route). Required for intracellular growth in macrophages and for the assimilation of cholesterol-derived propionate. PrpR acts as a transcriptional activator of prpDC and icl genes when propionate is the main carbon source, and as a ramB repressor. During growth on propionate, PrpR also acts as a transcriptional repressor of dnaA, which encodes the DnaA initiator protein responsible for initiating chromosomal replication. It is possibly involved in the regulation of genes responsible for controlling cholesterol utilization. The chain is HTH-type transcriptional regulator PrpR from Mycobacterium tuberculosis (strain ATCC 25618 / H37Rv).